A 462-amino-acid polypeptide reads, in one-letter code: UDP-N-acetylmuramoylalanine--D-glutamate ligase (462 aa).

109–115 (GTDGKST) provides a ligand contact to ATP.

Belongs to the MurCDEF family.

The protein resides in the cytoplasm. It carries out the reaction UDP-N-acetyl-alpha-D-muramoyl-L-alanine + D-glutamate + ATP = UDP-N-acetyl-alpha-D-muramoyl-L-alanyl-D-glutamate + ADP + phosphate + H(+). It functions in the pathway cell wall biogenesis; peptidoglycan biosynthesis. Functionally, cell wall formation. Catalyzes the addition of glutamate to the nucleotide precursor UDP-N-acetylmuramoyl-L-alanine (UMA). The sequence is that of UDP-N-acetylmuramoylalanine--D-glutamate ligase from Leptospira borgpetersenii serovar Hardjo-bovis (strain JB197).